The chain runs to 177 residues: Large ribosomal subunit protein uL6 (177 aa).

The protein belongs to the universal ribosomal protein uL6 family. As to quaternary structure, part of the 50S ribosomal subunit.

In terms of biological role, this protein binds to the 23S rRNA, and is important in its secondary structure. It is located near the subunit interface in the base of the L7/L12 stalk, and near the tRNA binding site of the peptidyltransferase center. The sequence is that of Large ribosomal subunit protein uL6 from Janthinobacterium sp. (strain Marseille) (Minibacterium massiliensis).